We begin with the raw amino-acid sequence, 691 residues long: Elongation factor G (691 aa).

A tr-type G domain is found at glutamate 8–leucine 283. GTP is bound by residues alanine 17–threonine 24, aspartate 81–histidine 85, and asparagine 135–aspartate 138.

The protein belongs to the TRAFAC class translation factor GTPase superfamily. Classic translation factor GTPase family. EF-G/EF-2 subfamily.

Its subcellular location is the cytoplasm. Catalyzes the GTP-dependent ribosomal translocation step during translation elongation. During this step, the ribosome changes from the pre-translocational (PRE) to the post-translocational (POST) state as the newly formed A-site-bound peptidyl-tRNA and P-site-bound deacylated tRNA move to the P and E sites, respectively. Catalyzes the coordinated movement of the two tRNA molecules, the mRNA and conformational changes in the ribosome. This is Elongation factor G from Lawsonia intracellularis (strain PHE/MN1-00).